Here is a 943-residue protein sequence, read N- to C-terminus: Translation initiation factor IF-2 (943 aa).

Residues 35 to 359 form a disordered region; it reads MSSIDQDQEA…MPQRKERPLP (325 aa). Positions 57-76 are enriched in low complexity; the sequence is KAPSSQAAKTPAKAAKTSSA. Basic and acidic residues-rich tracts occupy residues 92-103 and 110-124; these read SNDHADAAEHSQ and AKQENKPARSNKTSD. A compositionally biased stretch (polar residues) spans 130–141; it reads SKSTILRPRSTQ. Low complexity predominate over residues 142–190; it reads TAHTNTNHNRGGNTASANNTANGRNSNRSNNNNNNRSANNANRSGNNNR. Basic and acidic residues-rich tracts occupy residues 191-205, 239-250, and 259-271; these read SNERNRNDRNRRFDN, ASERQQPKRQEA, and KRSEQPRTERPRT. Composition is skewed to low complexity over residues 289–299 and 315–330; these read PAAAAPKPASA and NFGRSNSYGNRNGFNR. Residues 331–342 are compositionally biased toward basic residues; the sequence is NNRRNKKNKRRQ. The segment covering 346-358 has biased composition (basic and acidic residues); sequence PKKEMPQRKERPL. The 170-residue stretch at 444-613 folds into the tr-type G domain; sequence PRPPVVTIMG…LLEADVLELK (170 aa). Residues 453–460 form a G1 region; sequence GHVDHGKT. GTP is bound at residue 453–460; the sequence is GHVDHGKT. Residues 478–482 are G2; sequence GITQH. The G3 stretch occupies residues 499–502; sequence DTPG. Residues 499–503 and 553–556 contribute to the GTP site; these read DTPGH and NKID. Residues 553-556 are G4; that stretch reads NKID. The G5 stretch occupies residues 589–591; that stretch reads SAK.

This sequence belongs to the TRAFAC class translation factor GTPase superfamily. Classic translation factor GTPase family. IF-2 subfamily.

It localises to the cytoplasm. Functionally, one of the essential components for the initiation of protein synthesis. Protects formylmethionyl-tRNA from spontaneous hydrolysis and promotes its binding to the 30S ribosomal subunits. Also involved in the hydrolysis of GTP during the formation of the 70S ribosomal complex. The polypeptide is Translation initiation factor IF-2 (Lacticaseibacillus paracasei (strain ATCC 334 / BCRC 17002 / CCUG 31169 / CIP 107868 / KCTC 3260 / NRRL B-441) (Lactobacillus paracasei)).